The chain runs to 783 residues: NADH-quinone oxidoreductase subunit 3 (783 aa).

Residues methionine 1–valine 99 form the 2Fe-2S ferredoxin-type domain. The [2Fe-2S] cluster site is built by cysteine 34, cysteine 45, cysteine 48, and cysteine 83. In terms of domain architecture, 4Fe-4S His(Cys)3-ligated-type spans valine 99 to glycine 138. Residues histidine 115, cysteine 119, cysteine 122, cysteine 128, cysteine 181, cysteine 184, cysteine 187, cysteine 230, cysteine 256, cysteine 259, cysteine 263, and cysteine 291 each contribute to the [4Fe-4S] cluster site. Residues methionine 249–arginine 305 form the 4Fe-4S Mo/W bis-MGD-type domain.

Belongs to the complex I 75 kDa subunit family. As to quaternary structure, NDH-1 is composed of 15 different subunits, Nqo1 to Nqo15. The complex has a L-shaped structure, with the hydrophobic arm (subunits Nqo7, Nqo8 and Nqo10 to Nqo14) embedded in the membrane and the hydrophilic peripheral arm (subunits Nqo1 to Nqo6, Nqo9 and Nqo15) protruding into the bacterial cytoplasm. The hydrophilic domain contains all the redox centers. The cofactor is [2Fe-2S] cluster. [4Fe-4S] cluster is required as a cofactor.

The protein localises to the cell membrane. The enzyme catalyses a quinone + NADH + 5 H(+)(in) = a quinol + NAD(+) + 4 H(+)(out). Functionally, NDH-1 shuttles electrons from NADH, via FMN and iron-sulfur (Fe-S) centers, to quinones in the respiratory chain. The immediate electron acceptor for the enzyme in this species is menaquinone. Couples the redox reaction to proton translocation (for every two electrons transferred, four hydrogen ions are translocated across the cytoplasmic membrane), and thus conserves the redox energy in a proton gradient required for the synthesis of ATP. This Thermus thermophilus (strain ATCC 27634 / DSM 579 / HB8) protein is NADH-quinone oxidoreductase subunit 3 (nqo3).